An 85-amino-acid polypeptide reads, in one-letter code: Translation initiation factor IF-1 2 (85 aa).

Residues 1–72 (MAKEELIEMH…SKGRITFRHI (72 aa)) form the S1-like domain.

This sequence belongs to the IF-1 family. Component of the 30S ribosomal translation pre-initiation complex which assembles on the 30S ribosome in the order IF-2 and IF-3, IF-1 and N-formylmethionyl-tRNA(fMet); mRNA recruitment can occur at any time during PIC assembly.

The protein resides in the cytoplasm. Functionally, one of the essential components for the initiation of protein synthesis. Stabilizes the binding of IF-2 and IF-3 on the 30S subunit to which N-formylmethionyl-tRNA(fMet) subsequently binds. Helps modulate mRNA selection, yielding the 30S pre-initiation complex (PIC). Upon addition of the 50S ribosomal subunit IF-1, IF-2 and IF-3 are released leaving the mature 70S translation initiation complex. This chain is Translation initiation factor IF-1 2, found in Polaromonas sp. (strain JS666 / ATCC BAA-500).